The following is a 180-amino-acid chain: Meiotic recombination protein rec15 (180 aa).

As to quaternary structure, homomer. Interacts (via C-terminus) with hop1 (via C-terminus); the interaction is direct. Interacts (via C-terminus) with rec10; the interaction is direct. Interacts with mde2; the interaction is direct.

It localises to the nucleus. The protein localises to the chromosome. Required during the early stages of meiosis for meiotic recombination. The protein is Meiotic recombination protein rec15 of Schizosaccharomyces pombe (strain 972 / ATCC 24843) (Fission yeast).